The chain runs to 154 residues: 17.0 kDa class II heat shock protein (154 aa).

Positions 39-154 constitute a sHSP domain; sequence DARAMAATPA…KPKTIEIKVA (116 aa).

Belongs to the small heat shock protein (HSP20) family.

The protein resides in the cytoplasm. This chain is 17.0 kDa class II heat shock protein (HSP18), found in Zea mays (Maize).